The chain runs to 105 residues: Cysteine-rich venom protein VAR2 (105 aa).

The first 22 residues, 1–22 (MILLKLYLTLAAILCQSRGTTS), serve as a signal peptide directing secretion.

The protein belongs to the CRISP family. Contains 8 disulfide bonds. In terms of tissue distribution, expressed by the venom gland.

Its subcellular location is the secreted. In terms of biological role, blocks ryanodine receptors, and potassium channels. This is Cysteine-rich venom protein VAR2 from Varanus acanthurus (Ridge-tailed monitor).